The following is a 954-amino-acid chain: Glycine dehydrogenase (decarboxylating) (954 aa).

An N6-(pyridoxal phosphate)lysine modification is found at Lys-706.

This sequence belongs to the GcvP family. In terms of assembly, the glycine cleavage system is composed of four proteins: P, T, L and H. Requires pyridoxal 5'-phosphate as cofactor.

The enzyme catalyses N(6)-[(R)-lipoyl]-L-lysyl-[glycine-cleavage complex H protein] + glycine + H(+) = N(6)-[(R)-S(8)-aminomethyldihydrolipoyl]-L-lysyl-[glycine-cleavage complex H protein] + CO2. The glycine cleavage system catalyzes the degradation of glycine. The P protein binds the alpha-amino group of glycine through its pyridoxal phosphate cofactor; CO(2) is released and the remaining methylamine moiety is then transferred to the lipoamide cofactor of the H protein. The chain is Glycine dehydrogenase (decarboxylating) from Pseudomonas syringae pv. tomato (strain ATCC BAA-871 / DC3000).